The following is a 404-amino-acid chain: Cysteine desulfurase IscS (404 aa).

Residues 75 to 76 (AT), asparagine 155, glutamine 183, and 203 to 205 (SGH) contribute to the pyridoxal 5'-phosphate site. Lysine 206 carries the post-translational modification N6-(pyridoxal phosphate)lysine. Threonine 243 contacts pyridoxal 5'-phosphate. The active-site Cysteine persulfide intermediate is cysteine 328. Cysteine 328 contributes to the [2Fe-2S] cluster binding site.

The protein belongs to the class-V pyridoxal-phosphate-dependent aminotransferase family. NifS/IscS subfamily. In terms of assembly, homodimer. Forms a heterotetramer with IscU, interacts with other sulfur acceptors. The cofactor is pyridoxal 5'-phosphate.

The protein localises to the cytoplasm. It carries out the reaction (sulfur carrier)-H + L-cysteine = (sulfur carrier)-SH + L-alanine. The protein operates within cofactor biosynthesis; iron-sulfur cluster biosynthesis. Functionally, master enzyme that delivers sulfur to a number of partners involved in Fe-S cluster assembly, tRNA modification or cofactor biosynthesis. Catalyzes the removal of elemental sulfur atoms from cysteine to produce alanine. Functions as a sulfur delivery protein for Fe-S cluster synthesis onto IscU, an Fe-S scaffold assembly protein, as well as other S acceptor proteins. This Klebsiella pneumoniae subsp. pneumoniae (strain ATCC 700721 / MGH 78578) protein is Cysteine desulfurase IscS.